Reading from the N-terminus, the 662-residue chain is UvrABC system protein B (662 aa).

A Helicase ATP-binding domain is found at 31–188 (DNIEGGEKAQ…NDLVDIQFER (158 aa)). 44–51 (GATGTGKT) is an ATP binding site. A Beta-hairpin motif is present at residues 97-120 (YYDYYQPEAYVPSSDTYIEKDSSV). Residues 435–601 (QIDDLLGEIN…TIKKEIRDLI (167 aa)) form the Helicase C-terminal domain. The UVR domain occupies 626 to 661 (KELVKKLEKQMQEAVEVLDFELAAQIRDMMLEVKAL).

The protein belongs to the UvrB family. As to quaternary structure, forms a heterotetramer with UvrA during the search for lesions. Interacts with UvrC in an incision complex.

Its subcellular location is the cytoplasm. Functionally, the UvrABC repair system catalyzes the recognition and processing of DNA lesions. A damage recognition complex composed of 2 UvrA and 2 UvrB subunits scans DNA for abnormalities. Upon binding of the UvrA(2)B(2) complex to a putative damaged site, the DNA wraps around one UvrB monomer. DNA wrap is dependent on ATP binding by UvrB and probably causes local melting of the DNA helix, facilitating insertion of UvrB beta-hairpin between the DNA strands. Then UvrB probes one DNA strand for the presence of a lesion. If a lesion is found the UvrA subunits dissociate and the UvrB-DNA preincision complex is formed. This complex is subsequently bound by UvrC and the second UvrB is released. If no lesion is found, the DNA wraps around the other UvrB subunit that will check the other stand for damage. The protein is UvrABC system protein B of Streptococcus pneumoniae (strain ATCC 700669 / Spain 23F-1).